A 250-amino-acid chain; its full sequence is Pyridoxine 5'-phosphate synthase (250 aa).

2 residues coordinate 3-amino-2-oxopropyl phosphate: Asn-8 and Arg-19. Residue His-44 is the Proton acceptor of the active site. 1-deoxy-D-xylulose 5-phosphate-binding residues include Arg-46 and His-51. Catalysis depends on Glu-76, which acts as the Proton acceptor. Residue Thr-106 participates in 1-deoxy-D-xylulose 5-phosphate binding. The active-site Proton donor is His-200. Residues Asp-201 and 223 to 224 (GH) each bind 3-amino-2-oxopropyl phosphate.

The protein belongs to the PNP synthase family. As to quaternary structure, homooctamer; tetramer of dimers.

The protein resides in the cytoplasm. The enzyme catalyses 3-amino-2-oxopropyl phosphate + 1-deoxy-D-xylulose 5-phosphate = pyridoxine 5'-phosphate + phosphate + 2 H2O + H(+). Its pathway is cofactor biosynthesis; pyridoxine 5'-phosphate biosynthesis; pyridoxine 5'-phosphate from D-erythrose 4-phosphate: step 5/5. In terms of biological role, catalyzes the complicated ring closure reaction between the two acyclic compounds 1-deoxy-D-xylulose-5-phosphate (DXP) and 3-amino-2-oxopropyl phosphate (1-amino-acetone-3-phosphate or AAP) to form pyridoxine 5'-phosphate (PNP) and inorganic phosphate. The polypeptide is Pyridoxine 5'-phosphate synthase (Rhizobium meliloti (strain 1021) (Ensifer meliloti)).